Reading from the N-terminus, the 286-residue chain is Pyridoxal kinase PdxY (286 aa).

Residues serine 9 and 44-45 (TQ) each bind substrate. ATP-binding positions include aspartate 111, alanine 143, glutamate 148, lysine 181, and 208 to 211 (RPLV). Aspartate 222 is a binding site for substrate.

It belongs to the pyridoxine kinase family. PdxY subfamily. Homodimer. Mg(2+) serves as cofactor.

The enzyme catalyses pyridoxal + ATP = pyridoxal 5'-phosphate + ADP + H(+). It functions in the pathway cofactor metabolism; pyridoxal 5'-phosphate salvage; pyridoxal 5'-phosphate from pyridoxal: step 1/1. Its function is as follows. Pyridoxal kinase involved in the salvage pathway of pyridoxal 5'-phosphate (PLP). Catalyzes the phosphorylation of pyridoxal to PLP. This Pectobacterium atrosepticum (strain SCRI 1043 / ATCC BAA-672) (Erwinia carotovora subsp. atroseptica) protein is Pyridoxal kinase PdxY.